Reading from the N-terminus, the 50-residue chain is Photosystem II reaction center protein M (50 aa).

The chain crosses the membrane as a helical span at residues 7–27 (GFIISLLFVGIPTIFLVGLYI). The disordered stretch occupies residues 31 to 50 (DGEKSSFFSDSSKGKLGPKS).

This sequence belongs to the PsbM family. As to quaternary structure, PSII is composed of 1 copy each of membrane proteins PsbA, PsbB, PsbC, PsbD, PsbE, PsbF, PsbH, PsbI, PsbJ, PsbK, PsbL, PsbM, PsbT, PsbX, PsbY, Psb30/Ycf12, peripheral proteins PsbO, CyanoQ (PsbQ), PsbU, PsbV and a large number of cofactors. It forms dimeric complexes.

Its subcellular location is the cellular thylakoid membrane. Functionally, one of the components of the core complex of photosystem II (PSII). PSII is a light-driven water:plastoquinone oxidoreductase that uses light energy to abstract electrons from H(2)O, generating O(2) and a proton gradient subsequently used for ATP formation. It consists of a core antenna complex that captures photons, and an electron transfer chain that converts photonic excitation into a charge separation. This subunit is found at the monomer-monomer interface. This Prochlorococcus marinus (strain SARG / CCMP1375 / SS120) protein is Photosystem II reaction center protein M.